The sequence spans 1111 residues: Histone deacetylase 5 (1111 aa).

A Glycyl lysine isopeptide (Lys-Gly) (interchain with G-Cter in SUMO2) cross-link involves residue Lys35. Disordered regions lie at residues 40–63 (GAMP…RGAL), 107–136 (RQHE…EQQR), and 187–272 (KEPT…SSPL). Positions 238–249 (DSRDDFPLRKTA) are enriched in basic and acidic residues. Position 250 is a phosphoserine; by AMPK, CaMK1, SIK1 and PKD/PRKD1 (Ser250). Positions 263–272 (KVAERRSSPL) are enriched in basic and acidic residues. Thr283 is subject to Phosphothreonine; by PKC. The segment at 474 to 495 (TVGKLPRHRPLSRTQSSPLPQS) is disordered. Over residues 485 to 495 (SRTQSSPLPQS) the composition is skewed to low complexity. A Phosphoserine; by AMPK, CaMK1, SIK1 and PKD/PRKD1 modification is found at Ser489. Lys524 carries the post-translational modification N6-acetyllysine. Disordered regions lie at residues 527-611 (TKTG…LEES) and 645-666 (LGRT…DQPT). The segment covering 572–610 (STQEDLEEEEDEEEEDEDCIQVKDEEGESGPDEGPDLEE) has biased composition (acidic residues). A phosphoserine mark is found at Ser600 and Ser650. The segment at 671–1017 (TTGVVYDTFM…VSALLSVELQ (347 aa)) is histone deacetylase. Zn(2+) is bound by residues Cys685, Cys687, His693, and Cys770. His822 is a catalytic residue. The Nuclear export signal motif lies at 1070-1109 (EEAETVSAMALLSVGAEQAQAVATQEHSPRPAEEPMEQEP). The segment at 1086 to 1111 (EQAQAVATQEHSPRPAEEPMEQEPTL) is disordered. A Phosphoserine modification is found at Ser1097.

The protein belongs to the histone deacetylase family. HD type 2 subfamily. As to quaternary structure, interacts with AHRR, BAHD1, BCOR, HDAC7, HDAC9, CTBP1, MEF2C, NCOR2, NRIP1, PHB2 and a 14-3-3 chaperone protein. Interacts with BCL6, DDIT3/CHOP, GRK5, KDM5B and MYOCD. Interacts with EP300 in the presence of TFAP2C. Interacts with ANKRA2. Interacts with CUL7 (as part of the 3M complex); negatively regulated by ANKRA2. Interacts with ZBTB7B; the interaction allows the recruitment of HDAC4 on CD8 loci for deacetylation and possible inhibition of CD8 genes expression. Interacts with RARA. Phosphorylated by AMPK, CaMK1, SIK1 and PRKD1 at Ser-250 and Ser-489. The phosphorylation is required for the export to the cytoplasm and inhibition. Phosphorylated by the PKC kinases PKN1 and PKN2, impairing nuclear import. Phosphorylated by GRK5, leading to nuclear export of HDAC5 and allowing MEF2-mediated transcription. Post-translationally, ubiquitinated. Polyubiquitination however does not lead to its degradation.

It localises to the nucleus. The protein resides in the cytoplasm. It catalyses the reaction N(6)-acetyl-L-lysyl-[histone] + H2O = L-lysyl-[histone] + acetate. In terms of biological role, responsible for the deacetylation of lysine residues on the N-terminal part of the core histones (H2A, H2B, H3 and H4). Histone deacetylation gives a tag for epigenetic repression and plays an important role in transcriptional regulation, cell cycle progression and developmental events. Histone deacetylases act via the formation of large multiprotein complexes. Involved in muscle maturation by repressing transcription of myocyte enhancer MEF2C. During muscle differentiation, it shuttles into the cytoplasm, allowing the expression of myocyte enhancer factors. Serves as a corepressor of RARA and causes its deacetylation. In association with RARA, plays a role in the repression of microRNA-10a and thereby in the inflammatory response. In Cricetulus griseus (Chinese hamster), this protein is Histone deacetylase 5 (HDAC5).